Consider the following 66-residue polypeptide: Large ribosomal subunit protein bL35 (66 aa).

It belongs to the bacterial ribosomal protein bL35 family.

The sequence is that of Large ribosomal subunit protein bL35 from Caulobacter sp. (strain K31).